A 355-amino-acid polypeptide reads, in one-letter code: 3-dehydroquinate synthase (355 aa).

NAD(+) contacts are provided by residues 105–109 (GVVGD), 129–130 (TS), Lys142, Lys151, and 169–172 (TLKT). Zn(2+) is bound by residues Glu184, His246, and His263.

It belongs to the sugar phosphate cyclases superfamily. Dehydroquinate synthase family. The cofactor is NAD(+). Co(2+) serves as cofactor. It depends on Zn(2+) as a cofactor.

The protein localises to the cytoplasm. It catalyses the reaction 7-phospho-2-dehydro-3-deoxy-D-arabino-heptonate = 3-dehydroquinate + phosphate. The protein operates within metabolic intermediate biosynthesis; chorismate biosynthesis; chorismate from D-erythrose 4-phosphate and phosphoenolpyruvate: step 2/7. Its function is as follows. Catalyzes the conversion of 3-deoxy-D-arabino-heptulosonate 7-phosphate (DAHP) to dehydroquinate (DHQ). This is 3-dehydroquinate synthase from Streptococcus agalactiae serotype III (strain NEM316).